Consider the following 319-residue polypeptide: Protein SICKLE (319 aa).

Disordered stretches follow at residues Met-1 to Phe-59, Ser-71 to Glu-239, and Cys-262 to Gln-299. 2 stretches are compositionally biased toward polar residues: residues Thr-27 to Thr-56 and Pro-78 to His-88. Pro residues predominate over residues Pro-93–Pro-103. Residues Ser-185 to Asn-210 show a composition bias toward polar residues. Over residues Asp-228–Ala-238 the composition is skewed to basic and acidic residues. The segment covering Ser-285–Gln-299 has biased composition (polar residues).

In terms of assembly, interacts with ubiquitin thioesterases UBP12 and UBP13, and with protein phosphatase 2A subunits PP2AB1, PP2AB2, PP2A3, PP2A4, PP2AA1 and PP2AA2. Expressed in the shoot apical meristem (SAM), embryos, seedlings, root tips, and root and leaf primordia.

Its subcellular location is the nucleus. It localises to the cytoplasm. The protein localises to the cytosol. Involved in miRNAs and siRNAs biogenesis and thus promotes gene silencing. Modulates auxin (IAA) transport-related developmental programs by regulating protein phosphatase 2A (PP2As)-driven auxin efflux carrier PIN proteins recycling and polarity. Required during development. Necessary for abiotic stress (e.g. chilling and salt) tolerance. This is Protein SICKLE from Arabidopsis thaliana (Mouse-ear cress).